The sequence spans 328 residues: Serine/threonine protein kinase RdoA (328 aa).

Catalysis depends on D201, which acts as the Proton acceptor. Positions 206 and 217 each coordinate Mg(2+). The active site involves D217.

Belongs to the SrkA/RdoA protein kinase family. As to quaternary structure, monomer. Mg(2+) serves as cofactor.

Its subcellular location is the cytoplasm. It carries out the reaction L-seryl-[protein] + ATP = O-phospho-L-seryl-[protein] + ADP + H(+). It catalyses the reaction L-threonyl-[protein] + ATP = O-phospho-L-threonyl-[protein] + ADP + H(+). Its function is as follows. A protein kinase that (auto)phosphorylates on Ser and Thr residues, probably involved in the extracytoplasmic stress response. Probably acts to suppress the effects of stress linked to accumulation of reactive oxygen species. This chain is Serine/threonine protein kinase RdoA, found in Salmonella typhimurium (strain LT2 / SGSC1412 / ATCC 700720).